Consider the following 349-residue polypeptide: DNA polymerase IV (349 aa).

In terms of domain architecture, UmuC spans 7 to 188; the sequence is IIHIDMDYFF…LPVKKLFGVG (182 aa). Mg(2+) contacts are provided by Asp-11 and Asp-106. The active site involves Glu-107.

Belongs to the DNA polymerase type-Y family. As to quaternary structure, monomer. The cofactor is Mg(2+).

It localises to the cytoplasm. It catalyses the reaction DNA(n) + a 2'-deoxyribonucleoside 5'-triphosphate = DNA(n+1) + diphosphate. Poorly processive, error-prone DNA polymerase involved in untargeted mutagenesis. Copies undamaged DNA at stalled replication forks, which arise in vivo from mismatched or misaligned primer ends. These misaligned primers can be extended by PolIV. Exhibits no 3'-5' exonuclease (proofreading) activity. May be involved in translesional synthesis, in conjunction with the beta clamp from PolIII. This is DNA polymerase IV from Francisella tularensis subsp. novicida (strain U112).